We begin with the raw amino-acid sequence, 176 residues long: MTETREPTETGGYASLEEDDEDLSPEPDSEEEEEEEEEETTDDPEYDPGYKVKQRIGGGRGGPSRRAPRATQPAGPPAQPCQLCGRSALGEAPPGTPPCRLCCPATATQEAPGPESRALGEEEEEPSRTGETRPAGRDGDEDEEEGGTYHCTECEDSFDNLGELHGHFMLHARGEV.

Residues 1–152 (MTETREPTET…EEEGGTYHCT (152 aa)) form a disordered region. Residues 16–46 (LEEDDEDLSPEPDSEEEEEEEEEETTDDPEY) show a composition bias toward acidic residues. Threonine 96 is subject to Phosphothreonine. Basic and acidic residues predominate over residues 126–138 (PSRTGETRPAGRD). The C2H2-type zinc finger occupies 149–171 (YHCTECEDSFDNLGELHGHFMLH).

In Mus musculus (Mouse), this protein is Zinc finger protein 428 (Znf428).